The sequence spans 489 residues: Actin-related protein 4 (489 aa).

Positions 323 to 379 are disordered; the sequence is KRTKPSGVNKSDKKVTPTEEKEQEAVSKSTSPAANSADTPNETGKRPLEEEKPPKEN. The span at 332–347 shows a compositional bias: basic and acidic residues; the sequence is KSDKKVTPTEEKEQEA. Residues 348 to 364 are compositionally biased toward polar residues; the sequence is VSKSTSPAANSADTPNE. At Ser-349 the chain carries Phosphoserine. A compositionally biased stretch (basic and acidic residues) spans 365-379; sequence TGKRPLEEEKPPKEN.

The protein belongs to the actin family. ARP4 subfamily. Component of the NuA4 histone acetyltransferase complex composed of at least ACT1, ARP4, EAF3, EAF5, EAF6, EAF7, EPL1, ESA1, SWC4, TRA1, VID21, YAF9 and YNG2. Component of the chromatin-remodeling INO80 complex, at least composed of ARP4, ARP5, ARP8, RVB1, RVB2, TAF14, NHP10, IES1, IES3, IES4, IES6, ACT1, IES2, IES5 and INO80. Component of the SWR1 chromatin remodeling complex composed of at least ACT1, ARP4, RVB1, RVB2, ARP6, YAF9, VPS71, VPS72, SWC3, SWC4, SWC5, SWC7 and SWR1, and perhaps BDF1. Interacts with histones H4 (HHF1 and HHF2), H3 (HHT1 and HHT2) and H2A (HTA1 and HTA2).

Its subcellular location is the nucleus. In terms of biological role, chromatin interaction component of the NuA4 histone acetyltransferase complex which is involved in transcriptional activation of selected genes principally by acetylation of nucleosomal histone H4 and H2A. The NuA4 complex is also involved in DNA repair. ARP4 recognizes H2AS128ph (gamma-H2A) and is required for NuA4 complex integrity. Component of the SWR1 complex which mediates the ATP-dependent exchange of histone H2A for the H2A variant HZT1 leading to transcriptional regulation of selected genes by chromatin remodeling. Component of the INO80 complex which remodels chromatin by shifting nucleosomes. Its ability to induce transcription of some phosphate-responsive genes is modulated by inositol polyphosphates. The INO80 complex is involved in DNA repair by associating to gamma-H2A as a response to DNA damage. In Saccharomyces cerevisiae (strain ATCC 204508 / S288c) (Baker's yeast), this protein is Actin-related protein 4 (ARP4).